Consider the following 713-residue polypeptide: Polyribonucleotide nucleotidyltransferase (713 aa).

Positions 493 and 499 each coordinate Mg(2+). Positions 560–619 constitute a KH domain; that stretch reads PRMITIKINPEKIRDVIGKGGSVIRALTEETGTTIDISDDGVVTIASTNSEGMAEAKKRI. In terms of domain architecture, S1 motif spans 629–697; that stretch reads GHVYEGTVLK…EKGRVRLSAK (69 aa).

The protein belongs to the polyribonucleotide nucleotidyltransferase family. The cofactor is Mg(2+).

It localises to the cytoplasm. The catalysed reaction is RNA(n+1) + phosphate = RNA(n) + a ribonucleoside 5'-diphosphate. Its function is as follows. Involved in mRNA degradation. Catalyzes the phosphorolysis of single-stranded polyribonucleotides processively in the 3'- to 5'-direction. The chain is Polyribonucleotide nucleotidyltransferase from Burkholderia mallei (strain NCTC 10247).